The following is a 201-amino-acid chain: uncharacterized protein (201 aa).

Positions 1 to 19 are cleaved as a signal peptide; it reads MKLIVSVFLIGCQFLNILG.

This is an uncharacterized protein from Acheta domesticus (House cricket).